Here is a 231-residue protein sequence, read N- to C-terminus: Probable calcium-binding protein CML21 (231 aa).

4 consecutive EF-hand domains span residues 54–89 (DGLR…LEIS), 90–125 (FDEE…VYLL), 145–180 (PTFE…SGER), and 181–216 (SSGR…WVGI). Residues Asp67, Asp69, Asn71, Ser73, and Glu78 each coordinate Ca(2+). Ca(2+)-binding residues include Asp158, Asn160, Asp162, Tyr164, Glu169, Asp194, Asp196, Asn198, Met200, and Glu205.

Functionally, potential calcium sensor. The chain is Probable calcium-binding protein CML21 (CML21) from Arabidopsis thaliana (Mouse-ear cress).